The primary structure comprises 269 residues: ATP synthase subunit gamma, mitochondrial (269 aa).

As to quaternary structure, F-type ATP synthases have 2 components, the catalytic core F(1) and the membrane-embedded component F(0), linked together by a central stalk and a peripheral stalk. The central stalk, also called rotor shaft, is often seen as part of F(1). The peripheral stalk is seen as part of F(0). F(0) contains the membrane channel next to the rotor. F-type ATP synthases form dimers but each monomer functions independently in ATP generation. The dimer consists of 18 different polypeptides: ATP1 (subunit alpha, part of F(1), 3 molecules per monomer), ATP2 (subunit beta, part of F(1), 3 molecules per monomer), ATP3 (subunit gamma, part of the central stalk), ATP4 (subunit b, part of the peripheral stalk), ATP5/OSCP (subunit 5/OSCP, part of the peripheral stalk), ATP6 (subunit a, part of the peripheral stalk), ATP7 (subunit d, part of the peripheral stalk), ATP8 (subunit 8, part of the peripheral stalk), OLI1 (subunit c, part of the rotor, 10 molecules per monomer), ATP14 (subunit h, part of the peripheral stalk), ATP15 (subunit epsilon, part of the central stalk), ATP16 (subunit delta, part of the central stalk), ATP17 (subunit f, part of the peripheral stalk), ATP18 (subunit i/j, part of the peripheral stalk). Dimer-specific subunits are ATP19 (subunit k, at interface between monomers), ATP20 (subunit g, at interface between monomers), TIM11 (subunit e, at interface between monomers). Also contains subunit L.

The protein localises to the mitochondrion inner membrane. Functionally, mitochondrial membrane ATP synthase (F(1)F(0) ATP synthase or Complex V) produces ATP from ADP in the presence of a proton gradient across the membrane which is generated by electron transport complexes of the respiratory chain. F-type ATP synthases consist of two structural domains, F(1) - containing the extramembraneous catalytic core, and F(0) - containing the membrane proton channel, linked together by a central stalk and a peripheral stalk. During catalysis, ATP synthesis in the catalytic domain of F(1) is coupled via a rotary mechanism of the central stalk subunits to proton translocation. Part of the complex F(1) domain and the central stalk which is part of the complex rotary element. The gamma/ATP3 subunit protrudes into the catalytic domain formed of alpha/ATP1(3)beta/ATP2(3). Rotation of the central stalk against the surrounding alpha/ATP1(3)beta/ATP2(3) subunits leads to hydrolysis of ATP in three separate catalytic sites on the beta/ATP2 subunits. The sequence is that of ATP synthase subunit gamma, mitochondrial from Pichia angusta (Yeast).